A 336-amino-acid chain; its full sequence is Glycerol-3-phosphate dehydrogenase [NAD(P)+] (336 aa).

Ser13, Trp14, Arg34, and Lys108 together coordinate NADPH. The sn-glycerol 3-phosphate site is built by Lys108, Gly138, and Ser140. Residue Ala142 participates in NADPH binding. Residues Lys193, Asp246, Ser256, Arg257, and Asn258 each contribute to the sn-glycerol 3-phosphate site. The active-site Proton acceptor is the Lys193. Position 257 (Arg257) interacts with NADPH. NADPH-binding residues include Val281 and Glu283.

The protein belongs to the NAD-dependent glycerol-3-phosphate dehydrogenase family.

The protein localises to the cytoplasm. The catalysed reaction is sn-glycerol 3-phosphate + NAD(+) = dihydroxyacetone phosphate + NADH + H(+). It carries out the reaction sn-glycerol 3-phosphate + NADP(+) = dihydroxyacetone phosphate + NADPH + H(+). It participates in membrane lipid metabolism; glycerophospholipid metabolism. In terms of biological role, catalyzes the reduction of the glycolytic intermediate dihydroxyacetone phosphate (DHAP) to sn-glycerol 3-phosphate (G3P), the key precursor for phospholipid synthesis. This chain is Glycerol-3-phosphate dehydrogenase [NAD(P)+], found in Carboxydothermus hydrogenoformans (strain ATCC BAA-161 / DSM 6008 / Z-2901).